A 106-amino-acid chain; its full sequence is NADH-quinone oxidoreductase subunit K (106 aa).

A run of 3 helical transmembrane segments spans residues 10 to 30, 34 to 54, and 67 to 87; these read VTYI…GVLI, IVII…VFVT, and IVFF…ALVI.

This sequence belongs to the complex I subunit 4L family. In terms of assembly, NDH-1 is composed of 14 different subunits. Subunits NuoA, H, J, K, L, M, N constitute the membrane sector of the complex.

Its subcellular location is the cell inner membrane. It carries out the reaction a quinone + NADH + 5 H(+)(in) = a quinol + NAD(+) + 4 H(+)(out). Functionally, NDH-1 shuttles electrons from NADH, via FMN and iron-sulfur (Fe-S) centers, to quinones in the respiratory chain. The immediate electron acceptor for the enzyme in this species is believed to be ubiquinone. Couples the redox reaction to proton translocation (for every two electrons transferred, four hydrogen ions are translocated across the cytoplasmic membrane), and thus conserves the redox energy in a proton gradient. The polypeptide is NADH-quinone oxidoreductase subunit K (Leptospira biflexa serovar Patoc (strain Patoc 1 / Ames)).